Reading from the N-terminus, the 774-residue chain is Beta-xylosidase/alpha-L-arabinofuranosidase 1 (774 aa).

The first 33 residues, 1-33 (ANTKNREPKVSSVFLCFSIFYVTVLLNCNHVYG), serve as a signal peptide directing secretion. Asn48 and Asn136 each carry an N-linked (GlcNAc...) asparagine glycan. Residue Asp303 is part of the active site. Asn437 and Asn530 each carry an N-linked (GlcNAc...) asparagine glycan.

The protein belongs to the glycoside hydrolase 3 family. Post-translationally, proteolytically cleaved in roots to form a 65 kDa protein.

The protein localises to the secreted. Its subcellular location is the extracellular space. The protein resides in the extracellular matrix. The enzyme catalyses Hydrolysis of (1-&gt;4)-beta-D-xylans, to remove successive D-xylose residues from the non-reducing termini.. It carries out the reaction Hydrolysis of terminal non-reducing alpha-L-arabinofuranoside residues in alpha-L-arabinosides.. A bifunctional beta-xylosidase/alpha-L-arabinosidase, exo-enzyme that acts synergistically with endohydrolases. Releases xylose and arabinose from cell walls. Does not cleave xylan from oat spelts although xylan from oat spelts was degraded to xylose when this enzyme was used in combination with xylanase. Also releases xylose and arabinose from aryl glycosides, xylo-oligosaccharides, arabinan from sugar beet and arabino-oligosaccharides, arabinan from sugar beet and arabinoxylan from wheat. This is Beta-xylosidase/alpha-L-arabinofuranosidase 1 from Medicago sativa subsp. varia (Alfalfa).